The primary structure comprises 919 residues: Probable dipeptidyl-aminopeptidase B (919 aa).

Positions 1–89 (MGANSRVNDD…DGYVPSGGKP (89 aa)) are disordered. Residues 1-95 (MGANSRVNDD…GGKPAQRRTR (95 aa)) lie on the Cytoplasmic side of the membrane. A compositionally biased stretch (low complexity) spans 27–38 (DSSSTASISLTL). Residues 44 to 55 (HTATEPSKSTNG) show a composition bias toward polar residues. A helical; Signal-anchor for type II membrane protein membrane pass occupies residues 96–116 (IVFWLLVALCVGGWAMAFIIM). Over 117–919 (ATSPNNRHST…RVIRRLLHFG (803 aa)) the chain is Vacuolar. Residues 121–150 (NNRHSTSDSSSGGSESEIVKPNTPHDGKKI) are disordered. Residues 127–136 (SDSSSGGSES) show a composition bias toward low complexity. Asparagine 207, asparagine 303, asparagine 355, asparagine 577, and asparagine 665 each carry an N-linked (GlcNAc...) asparagine glycan. Serine 760 functions as the Charge relay system in the catalytic mechanism. N-linked (GlcNAc...) asparagine glycans are attached at residues asparagine 814 and asparagine 819. Catalysis depends on charge relay system residues aspartate 837 and histidine 870.

It belongs to the peptidase S9B family.

The protein localises to the vacuole membrane. The enzyme catalyses Release of an N-terminal dipeptide, Xaa-Yaa-|-Zaa-, from a polypeptide, preferentially when Yaa is Pro, provided Zaa is neither Pro nor hydroxyproline.. Type IV dipeptidyl-peptidase which removes N-terminal dipeptides sequentially from polypeptides having unsubstituted N-termini provided that the penultimate residue is proline. The protein is Probable dipeptidyl-aminopeptidase B (DAPB) of Arthroderma otae (strain ATCC MYA-4605 / CBS 113480) (Microsporum canis).